The primary structure comprises 584 residues: Asparagine synthetase [glutamine-hydrolyzing] 1 (584 aa).

Cysteine 2 (for GATase activity) is an active-site residue. Residues cysteine 2–glycine 185 enclose the Glutamine amidotransferase type-2 domain. L-glutamine contacts are provided by residues arginine 50–isoleucine 54, asparagine 75–glutamate 77, and aspartate 98. The Asparagine synthetase domain maps to proline 193–proline 516. ATP is bound by residues leucine 231, valine 267, and serine 341 to glycine 342.

The catalysed reaction is L-aspartate + L-glutamine + ATP + H2O = L-asparagine + L-glutamate + AMP + diphosphate + H(+). Its pathway is amino-acid biosynthesis; L-asparagine biosynthesis; L-asparagine from L-aspartate (L-Gln route): step 1/1. Its function is as follows. Essential for nitrogen assimilation, distribution and remobilization within the plant via the phloem. In Arabidopsis thaliana (Mouse-ear cress), this protein is Asparagine synthetase [glutamine-hydrolyzing] 1 (ASN1).